Here is a 65-residue protein sequence, read N- to C-terminus: Hirudin-3 (65 aa).

An interaction with thrombin active site region spans residues 1 to 3 (VVY). Cystine bridges form between Cys6/Cys14, Cys16/Cys28, and Cys22/Cys39. Positions 39 to 65 (CVTGEGTPKPQSHNDGDFEEIPEEYLQ) are disordered. O-linked (GalNAc...) threonine glycosylation is present at Thr45. The segment at 55 to 65 (DFEEIPEEYLQ) is interaction with fibrinogen-binding exosite of thrombin. The segment covering 55-65 (DFEEIPEEYLQ) has biased composition (acidic residues). The residue at position 63 (Tyr63) is a Sulfotyrosine.

Belongs to the protease inhibitor I14 (hirudin) family.

The protein localises to the secreted. Functionally, hirudin is a potent thrombin-specific protease inhibitor. It forms a stable non-covalent complex with alpha-thrombin, thereby abolishing its ability to cleave fibrinogen. This Hirudo medicinalis (Medicinal leech) protein is Hirudin-3.